A 507-amino-acid polypeptide reads, in one-letter code: ATP synthase subunit alpha (507 aa).

169-176 (GDRQIGKT) is an ATP binding site.

The protein belongs to the ATPase alpha/beta chains family. F-type ATPases have 2 components, CF(1) - the catalytic core - and CF(0) - the membrane proton channel. CF(1) has five subunits: alpha(3), beta(3), gamma(1), delta(1), epsilon(1). CF(0) has three main subunits: a(1), b(2) and c(9-12). The alpha and beta chains form an alternating ring which encloses part of the gamma chain. CF(1) is attached to CF(0) by a central stalk formed by the gamma and epsilon chains, while a peripheral stalk is formed by the delta and b chains.

The protein localises to the cell inner membrane. The catalysed reaction is ATP + H2O + 4 H(+)(in) = ADP + phosphate + 5 H(+)(out). Functionally, produces ATP from ADP in the presence of a proton gradient across the membrane. The alpha chain is a regulatory subunit. The polypeptide is ATP synthase subunit alpha (Desulfotalea psychrophila (strain LSv54 / DSM 12343)).